A 313-amino-acid polypeptide reads, in one-letter code: L-lactate dehydrogenase 1 (313 aa).

Residues V15, D36, R41, and Y66 each contribute to the NAD(+) site. Substrate is bound by residues Q83, R89, and 121-124; that span reads NPVD. NAD(+) is bound by residues 119–121 and S144; that span reads ASN. 149 to 152 contacts substrate; sequence DTAR. Residues R154 and H169 each contribute to the beta-D-fructose 1,6-bisphosphate site. The active-site Proton acceptor is H176. A Phosphotyrosine modification is found at Y218. T227 lines the substrate pocket.

The protein belongs to the LDH/MDH superfamily. LDH family. As to quaternary structure, homotetramer.

Its subcellular location is the cytoplasm. It catalyses the reaction (S)-lactate + NAD(+) = pyruvate + NADH + H(+). The protein operates within fermentation; pyruvate fermentation to lactate; (S)-lactate from pyruvate: step 1/1. Allosterically activated by fructose 1,6-bisphosphate (FBP). In terms of biological role, catalyzes the conversion of lactate to pyruvate. This chain is L-lactate dehydrogenase 1, found in Listeria monocytogenes serotype 4b (strain F2365).